We begin with the raw amino-acid sequence, 378 residues long: Enoyl-[acyl-carrier-protein] reductase 1, mitochondrial (378 aa).

The active-site Proton donor is the Y59. Residues N151, 180 to 183 (NSQV), 203 to 206 (RDGK), 284 to 287 (YGGM), 309 to 311 (YWL), and K372 each bind NADP(+).

This sequence belongs to the zinc-containing alcohol dehydrogenase family. Quinone oxidoreductase subfamily. In terms of assembly, homodimer.

It localises to the mitochondrion matrix. The catalysed reaction is a 2,3-saturated acyl-[ACP] + NADP(+) = a (2E)-enoyl-[ACP] + NADPH + H(+). Its function is as follows. Catalyzes the NADPH-dependent reduction of trans-2-enoyl thioesters in mitochondrial fatty acid synthesis (fatty acid synthesis type II). Fatty acid chain elongation in mitochondria uses acyl carrier protein (ACP) as an acyl group carrier, but the enzyme accepts both ACP and CoA thioesters as substrates in vitro. Required for respiration and the maintenance of the mitochondrial compartment. The polypeptide is Enoyl-[acyl-carrier-protein] reductase 1, mitochondrial (ETR1) (Debaryomyces hansenii (strain ATCC 36239 / CBS 767 / BCRC 21394 / JCM 1990 / NBRC 0083 / IGC 2968) (Yeast)).